Consider the following 501-residue polypeptide: Cytokinin dehydrogenase 2 (501 aa).

A signal peptide spans 1–22 (MANLRLMITLITVLMITKSSNG). N-linked (GlcNAc...) asparagine glycans are attached at residues asparagine 32 and asparagine 51. Residues 53-226 (TTVTPGGVIC…TRARIVLDHA (174 aa)) enclose the FAD-binding PCMH-type domain. FAD-binding residues include alanine 87, glycine 89, and glycine 91. Histidine 92 carries the post-translational modification Pros-8alpha-FAD histidine. Serine 93 and glutamine 97 together coordinate FAD. A glycan (N-linked (GlcNAc...) asparagine) is linked at asparagine 107. The FAD site is built by aspartate 150, threonine 155, serine 161, isoleucine 165, isoleucine 216, tyrosine 460, serine 495, and glutamine 498.

This sequence belongs to the oxygen-dependent FAD-linked oxidoreductase family. It depends on FAD as a cofactor. In terms of tissue distribution, expressed in the shoot apex, in stipules, and occasionally in the most apical part of the inflorescence stems. Not detected in roots.

It localises to the endoplasmic reticulum. The protein resides in the secreted. Its subcellular location is the extracellular space. It carries out the reaction N(6)-dimethylallyladenine + A + H2O = 3-methyl-2-butenal + adenine + AH2. Functionally, catalyzes the oxidation of cytokinins, a family of N(6)-substituted adenine derivatives that are plant hormones, where the substituent is an isopentenyl group. Modulates asymmetric cytokinin signaling in emerged lateral roots. Its activity determines cell elongation and number in emerged lateral roots and defines angular growth of lateral roots. This Arabidopsis thaliana (Mouse-ear cress) protein is Cytokinin dehydrogenase 2 (CKX2).